We begin with the raw amino-acid sequence, 384 residues long: WAT1-related protein At4g08290 (384 aa).

Transmembrane regions (helical) follow at residues 15–35, 43–63, 73–93, 104–124, 140–160, 186–206, 219–239, 255–275, 282–302, and 307–327; these read LLMI…MATL, VVIV…ALIF, LSVL…DQGF, TYTS…AWIL, IIGT…KGPL, WVVG…FYVL, SLSA…ALVV, FAPL…QGMV, VFVT…ASFI, and IHFG…MVVW. EamA domains follow at residues 25–154 and 198–326; these read AGTY…LVMT and VAWS…YMVV.

It belongs to the drug/metabolite transporter (DMT) superfamily. Plant drug/metabolite exporter (P-DME) (TC 2.A.7.4) family.

The protein localises to the membrane. The sequence is that of WAT1-related protein At4g08290 from Arabidopsis thaliana (Mouse-ear cress).